The sequence spans 338 residues: NADPH dehydrogenase (338 aa).

An FMN-binding site is contributed by 22-25; sequence SPMC. Tyrosine 27 contacts substrate. Alanine 59 and glutamine 101 together coordinate FMN. 163-166 contributes to the substrate binding site; it reads HAAH. Residues arginine 214 and 306–307 contribute to the FMN site; that span reads GR.

It belongs to the NADH:flavin oxidoreductase/NADH oxidase family. NamA subfamily. In terms of assembly, homotetramer. It depends on FMN as a cofactor.

The catalysed reaction is A + NADPH + H(+) = AH2 + NADP(+). Catalyzes the reduction of the double bond of an array of alpha,beta-unsaturated aldehydes and ketones. It also reduces the nitro group of nitroester and nitroaromatic compounds. It could have a role in detoxification processes. This chain is NADPH dehydrogenase, found in Listeria welshimeri serovar 6b (strain ATCC 35897 / DSM 20650 / CCUG 15529 / CIP 8149 / NCTC 11857 / SLCC 5334 / V8).